Here is a 265-residue protein sequence, read N- to C-terminus: uncharacterized protein (265 aa).

The first 20 residues, 1–20 (MSRAMALFFVLCWIQDEIVL), serve as a signal peptide directing secretion. Residues 192 to 212 (IIAAVSGVAILMAIVLLLLGL) form a helical membrane-spanning segment.

Its subcellular location is the membrane. This is an uncharacterized protein from Homo sapiens (Human).